The sequence spans 442 residues: Proline--tRNA ligase (442 aa).

The protein belongs to the class-II aminoacyl-tRNA synthetase family. ProS type 2 subfamily. Homodimer.

It is found in the cytoplasm. The catalysed reaction is tRNA(Pro) + L-proline + ATP = L-prolyl-tRNA(Pro) + AMP + diphosphate. Functionally, catalyzes the attachment of proline to tRNA(Pro) in a two-step reaction: proline is first activated by ATP to form Pro-AMP and then transferred to the acceptor end of tRNA(Pro). The protein is Proline--tRNA ligase of Brucella ovis (strain ATCC 25840 / 63/290 / NCTC 10512).